The following is a 328-amino-acid chain: Ferredoxin--NADP reductase (328 aa).

FAD-binding residues include S14, E33, Q41, Y46, I90, and F126.

It belongs to the ferredoxin--NADP reductase type 2 family. In terms of assembly, homodimer. It depends on FAD as a cofactor.

The enzyme catalyses 2 reduced [2Fe-2S]-[ferredoxin] + NADP(+) + H(+) = 2 oxidized [2Fe-2S]-[ferredoxin] + NADPH. The protein is Ferredoxin--NADP reductase of Mycoplasmoides gallisepticum (strain R(low / passage 15 / clone 2)) (Mycoplasma gallisepticum).